The sequence spans 146 residues: Large ribosomal subunit protein uL13 (146 aa).

Belongs to the universal ribosomal protein uL13 family. Part of the 50S ribosomal subunit.

In terms of biological role, this protein is one of the early assembly proteins of the 50S ribosomal subunit, although it is not seen to bind rRNA by itself. It is important during the early stages of 50S assembly. The polypeptide is Large ribosomal subunit protein uL13 (Borreliella burgdorferi (strain ATCC 35210 / DSM 4680 / CIP 102532 / B31) (Borrelia burgdorferi)).